The sequence spans 669 residues: MYGMLYESVQHYIQQEYGMETWRKVCQIVDCKHQSFKTHQIYPDKLMPDFAAALSASTGESFDFCMNFFGRCFVRFFSNFGYDKMIRSTGRYFCDFLQSIDNIHVQMRFTYPKMKSPSMQLTNMDDDGAVILYRSGRTGMSKYLIGQMTEVAKEFYGLDMTAYVLESQNDICGGTAGPIKLTEGPLTVIVKYRLDFDNRDYMAKRVNVIAHPSQLKMPSVDLNVFLELFPFTIVLDHDMKITLAGEKIVETWILHNPGVNPKTFIGSHILERFKCRRPKDTQIQWETILQMRTVLFEFELIRTGHNRAAYDAALNFDFENFDEASSLNEAQAMALASAKEFSAENAKEEAAAAATSKDEIDPATGQRRHSVGLRSILLKGQMFYIKDVDSLIFLCSPLIENLDELHGIGLYLNDLNPHGLSRELVMAGWQHCSKLEIMFEKEEQRSDELEKSLELADSWKRQGDELLYSMIPRPIAERMRKSEEHVCQSFEEVSVIFIEVMNIYDSGSNNIQDAMQAVTTLNKVFSALDEEIISPFVYKVETVGMVYMAVSGAPDVNPLHAEHACDLALRVMKKVKAHALPGVAIRVGINSGPVVAGVVGMKVPRYCLFGDTVNTASRMESSSDPWMIQLSNYTALKVQKVGYKVEARGFVKVKGKGEMETYWLLEGPE.

H104 is a heme binding site. Residues 430 to 458 are a coiled coil; sequence QHCSKLEIMFEKEEQRSDELEKSLELADS. The Guanylate cyclase domain maps to 494 to 620; that stretch reads SVIFIEVMNI…DTVNTASRME (127 aa).

This sequence belongs to the adenylyl cyclase class-4/guanylyl cyclase family. As to quaternary structure, heterodimer; with Gyc88E, in the presence of magnesium or manganese. The cofactor is heme. Expressed in embryos in a segmental pattern in the ventral nerve cord (VNC) and in the brain, beginning at stage 13 and continuing through to stage 17. Colocalized with Gyc-89Db in several peripheral neurons that innervate trachea, basiconical sensilla and the sensory cones in the posterior segments of the embryo. Expression in wandering 3rd instar larvae is most prominent in a small cluster of cells located in the anterior medial region of each brain lobe. In the VNC, expression is found in scattered cells both laterally and at the midline.

Its subcellular location is the cytoplasm. It catalyses the reaction GTP = 3',5'-cyclic GMP + diphosphate. Probably not activated by nitric oxide (NO). Heterodimer exhibits some stimulation, compounds (SIN-1 and two of the NONOates) that were ineffective at stimulating Gyc-88E homodimer did stimulate the heterodimer. Its function is as follows. Heterodimers with Gyc88E are activated in response to changing oxygen concentrations, alerting flies to hypoxic environments. Under normal oxygen concentrations, oxygen binds to the heme group and results in low levels of guanylyl cyclase activity. When exposed to reduced oxygen concentrations, the oxygen dissociates from the heme group resulting in activation of the enzyme. The chain is Soluble guanylate cyclase 89Db from Drosophila melanogaster (Fruit fly).